The sequence spans 527 residues: Putative BTB/POZ domain-containing protein R225 (527 aa).

One can recognise a BTB domain in the interval 16–89; it reads TDLELVLTDP…YGQTNRSTDY (74 aa).

The protein belongs to the mimivirus BTB/WD family.

This chain is Putative BTB/POZ domain-containing protein R225, found in Acanthamoeba polyphaga (Amoeba).